The following is a 362-amino-acid chain: UDP-N-acetylglucosamine--N-acetylmuramyl-(pentapeptide) pyrophosphoryl-undecaprenol N-acetylglucosamine transferase (362 aa).

UDP-N-acetyl-alpha-D-glucosamine contacts are provided by residues 15–17 (TGG), N127, R165, S191, I247, 266–271 (ALTVSE), and Q292.

It belongs to the glycosyltransferase 28 family. MurG subfamily.

It localises to the cell inner membrane. It carries out the reaction di-trans,octa-cis-undecaprenyl diphospho-N-acetyl-alpha-D-muramoyl-L-alanyl-D-glutamyl-meso-2,6-diaminopimeloyl-D-alanyl-D-alanine + UDP-N-acetyl-alpha-D-glucosamine = di-trans,octa-cis-undecaprenyl diphospho-[N-acetyl-alpha-D-glucosaminyl-(1-&gt;4)]-N-acetyl-alpha-D-muramoyl-L-alanyl-D-glutamyl-meso-2,6-diaminopimeloyl-D-alanyl-D-alanine + UDP + H(+). The protein operates within cell wall biogenesis; peptidoglycan biosynthesis. Functionally, cell wall formation. Catalyzes the transfer of a GlcNAc subunit on undecaprenyl-pyrophosphoryl-MurNAc-pentapeptide (lipid intermediate I) to form undecaprenyl-pyrophosphoryl-MurNAc-(pentapeptide)GlcNAc (lipid intermediate II). The polypeptide is UDP-N-acetylglucosamine--N-acetylmuramyl-(pentapeptide) pyrophosphoryl-undecaprenol N-acetylglucosamine transferase (Shewanella baltica (strain OS223)).